The chain runs to 380 residues: Succinyl-diaminopimelate desuccinylase (380 aa).

H69 serves as a coordination point for Zn(2+). Residue D71 is part of the active site. D102 serves as a coordination point for Zn(2+). Catalysis depends on E135, which acts as the Proton acceptor. Positions 136, 164, and 353 each coordinate Zn(2+).

This sequence belongs to the peptidase M20A family. DapE subfamily. In terms of assembly, homodimer. Zn(2+) is required as a cofactor. Requires Co(2+) as cofactor.

The catalysed reaction is N-succinyl-(2S,6S)-2,6-diaminopimelate + H2O = (2S,6S)-2,6-diaminopimelate + succinate. It functions in the pathway amino-acid biosynthesis; L-lysine biosynthesis via DAP pathway; LL-2,6-diaminopimelate from (S)-tetrahydrodipicolinate (succinylase route): step 3/3. Functionally, catalyzes the hydrolysis of N-succinyl-L,L-diaminopimelic acid (SDAP), forming succinate and LL-2,6-diaminopimelate (DAP), an intermediate involved in the bacterial biosynthesis of lysine and meso-diaminopimelic acid, an essential component of bacterial cell walls. The polypeptide is Succinyl-diaminopimelate desuccinylase (Cereibacter sphaeroides (strain KD131 / KCTC 12085) (Rhodobacter sphaeroides)).